Here is a 188-residue protein sequence, read N- to C-terminus: Protein GrpE (188 aa).

A compositionally biased stretch (basic and acidic residues) spans 1–16; that stretch reads MEERNEQVVEEVKEAQ. Residues 1 to 31 are disordered; it reads MEERNEQVVEEVKEAQVEEAVTPENSEETVE.

It belongs to the GrpE family. In terms of assembly, homodimer.

Its subcellular location is the cytoplasm. In terms of biological role, participates actively in the response to hyperosmotic and heat shock by preventing the aggregation of stress-denatured proteins, in association with DnaK and GrpE. It is the nucleotide exchange factor for DnaK and may function as a thermosensor. Unfolded proteins bind initially to DnaJ; upon interaction with the DnaJ-bound protein, DnaK hydrolyzes its bound ATP, resulting in the formation of a stable complex. GrpE releases ADP from DnaK; ATP binding to DnaK triggers the release of the substrate protein, thus completing the reaction cycle. Several rounds of ATP-dependent interactions between DnaJ, DnaK and GrpE are required for fully efficient folding. The chain is Protein GrpE from Bacillus cereus (strain G9842).